Here is a 165-residue protein sequence, read N- to C-terminus: Putative glycine-rich cell wall structural protein 1 (165 aa).

Positions Met1–Ala23 are cleaved as a signal peptide. R2; Tyr-rich repeat units lie at residues Gly56–Gly62 and Gly93–Gly99. Residues Ala105–Ser125 are disordered. An R2; Tyr-rich repeat occupies Gly132–Gly138. The segment at Gly146 to Glu165 is disordered.

It is found in the secreted. Its subcellular location is the cell wall. Its function is as follows. Responsible for plasticity of the cell wall. The sequence is that of Putative glycine-rich cell wall structural protein 1 (GRP-1) from Oryza sativa subsp. indica (Rice).